Here is a 436-residue protein sequence, read N- to C-terminus: Protein arginine methyltransferase NDUFAF7, mitochondrial (436 aa).

Residues 1-41 (MNALVRRCVARTGIPSIWRRKCFSSGNEPAESNHVTPMLRH) constitute a mitochondrion transit peptide. Residues 413-436 (QGGKACQSEAPSTSVPGFDELVWH) form a disordered region.

This sequence belongs to the NDUFAF7 family. In terms of assembly, interacts with NDUFS2.

The protein localises to the mitochondrion. The catalysed reaction is L-arginyl-[protein] + 2 S-adenosyl-L-methionine = N(omega),N(omega)'-dimethyl-L-arginyl-[protein] + 2 S-adenosyl-L-homocysteine + 2 H(+). Its function is as follows. Arginine methyltransferase involved in the assembly or stability of mitochondrial NADH:ubiquinone oxidoreductase complex (complex I). Acts by mediating symmetric dimethylation of 'Arg-118' of NDUFS2 after it assembles into the complex I, stabilizing the early intermediate complex. This chain is Protein arginine methyltransferase NDUFAF7, mitochondrial, found in Rattus norvegicus (Rat).